Here is a 309-residue protein sequence, read N- to C-terminus: Aromatic prenyltransferase (309 aa).

The protein belongs to the aromatic prenyltransferase family.

Functionally, prenyltransferase that attaches isoprenoid moieties to carbon atoms of aromatic substrates in an enzyme-catalyzed Friedel-Crafts reaction. Shows specificity for dimethylallyl diphosphate (DMAPP) and does not accept geranyl diphosphate (GPP) or isopentenyl diphosphate (IPP). Prenylates the artificial substrate 2,7-dihydroxynaphthalene (2,7-DHN), as well as dihydrophenazine-1-carboxylic acid and 4-hydroxybenzoic acid at lower levels. Only traces of products are detected with aspulvinone E or flaviolin as substrates; and no product is formed with L-tryptophan, L-tyrosine, or 4-hydroxyphenylpyruvate. Ptf seems no to be involved in the prenylation reaction in the biosynthesis of aspulvinone H and J and the physiological function of ptf remains unknown. In Botryotinia fuckeliana (strain B05.10) (Noble rot fungus), this protein is Aromatic prenyltransferase.